A 206-amino-acid chain; its full sequence is LexA repressor (206 aa).

Residues 28 to 48 (RAEIARRLGFKSANAAEEHLK) constitute a DNA-binding region (H-T-H motif). Active-site for autocatalytic cleavage activity residues include serine 123 and lysine 160.

The protein belongs to the peptidase S24 family. As to quaternary structure, homodimer.

The catalysed reaction is Hydrolysis of Ala-|-Gly bond in repressor LexA.. Its function is as follows. Represses a number of genes involved in the response to DNA damage (SOS response), including recA and lexA. In the presence of single-stranded DNA, RecA interacts with LexA causing an autocatalytic cleavage which disrupts the DNA-binding part of LexA, leading to derepression of the SOS regulon and eventually DNA repair. This is LexA repressor from Shewanella halifaxensis (strain HAW-EB4).